The following is a 141-amino-acid chain: MSSLLVKKLVESATTPMRGSEGAAGYDISSVEDVVVPAMGRIAVSTGISIRVPNGTYGRIAPRSGLAYKYGIDVLAGVIDSDYRGELKAILYNTTERDYIIKKGDRIAQLILEQIVTPDVAVVLELEDTARGGGGFGSTGI.

Belongs to the dUTPase family. The cofactor is Mg(2+).

The enzyme catalyses dUTP + H2O = dUMP + diphosphate + H(+). Its pathway is pyrimidine metabolism; dUMP biosynthesis; dUMP from dCTP (dUTP route): step 2/2. This enzyme is involved in nucleotide metabolism: it produces dUMP, the immediate precursor of thymidine nucleotides and it decreases the intracellular concentration of dUTP so that uracil cannot be incorporated into DNA. This is Deoxyuridine 5'-triphosphate nucleotidohydrolase from Chlorella (PBCV-1).